Here is a 302-residue protein sequence, read N- to C-terminus: 4-hydroxy-tetrahydrodipicolinate synthase (302 aa).

Threonine 55 is a binding site for pyruvate. Tyrosine 144 serves as the catalytic Proton donor/acceptor. The active-site Schiff-base intermediate with substrate is the lysine 172. Valine 214 is a binding site for pyruvate.

This sequence belongs to the DapA family. In terms of assembly, homotetramer; dimer of dimers.

It localises to the cytoplasm. The enzyme catalyses L-aspartate 4-semialdehyde + pyruvate = (2S,4S)-4-hydroxy-2,3,4,5-tetrahydrodipicolinate + H2O + H(+). It functions in the pathway amino-acid biosynthesis; L-lysine biosynthesis via DAP pathway; (S)-tetrahydrodipicolinate from L-aspartate: step 3/4. Catalyzes the condensation of (S)-aspartate-beta-semialdehyde [(S)-ASA] and pyruvate to 4-hydroxy-tetrahydrodipicolinate (HTPA). This chain is 4-hydroxy-tetrahydrodipicolinate synthase, found in Synechococcus sp. (strain WH7803).